A 301-amino-acid chain; its full sequence is Ribonuclease Z (301 aa).

Zn(2+) contacts are provided by histidine 61, histidine 63, aspartate 65, histidine 66, histidine 140, aspartate 211, and histidine 269. The Proton acceptor role is filled by aspartate 65.

It belongs to the RNase Z family. In terms of assembly, homodimer. Requires Zn(2+) as cofactor.

The enzyme catalyses Endonucleolytic cleavage of RNA, removing extra 3' nucleotides from tRNA precursor, generating 3' termini of tRNAs. A 3'-hydroxy group is left at the tRNA terminus and a 5'-phosphoryl group is left at the trailer molecule.. In terms of biological role, zinc phosphodiesterase, which displays some tRNA 3'-processing endonuclease activity. Probably involved in tRNA maturation, by removing a 3'-trailer from precursor tRNA. The polypeptide is Ribonuclease Z (Bradyrhizobium diazoefficiens (strain JCM 10833 / BCRC 13528 / IAM 13628 / NBRC 14792 / USDA 110)).